The chain runs to 358 residues: Peptide chain release factor 1 (358 aa).

Residue glutamine 233 is modified to N5-methylglutamine.

The protein belongs to the prokaryotic/mitochondrial release factor family. Post-translationally, methylated by PrmC. Methylation increases the termination efficiency of RF1.

It is found in the cytoplasm. Its function is as follows. Peptide chain release factor 1 directs the termination of translation in response to the peptide chain termination codons UAG and UAA. This chain is Peptide chain release factor 1, found in Staphylococcus haemolyticus (strain JCSC1435).